Consider the following 403-residue polypeptide: Indoleamine 2,3-dioxygenase 1 (403 aa).

Heme b is bound at residue His346. Residues Gln360–Gly381 form a disordered region. A compositionally biased stretch (basic and acidic residues) spans Lys363–Ala376.

The protein belongs to the indoleamine 2,3-dioxygenase family. As to quaternary structure, monomer. Heme b is required as a cofactor. As to expression, expressed in mature dendritic cells located in lymphoid organs (including lymph nodes, spleen, tonsils, Peyers's patches, the gut lamina propria, and the thymic medulla), in some epithelial cells of the female genital tract, as well as in endothelial cells of term placenta and in lung parenchyma. Weakly or not expressed in most normal tissues, but mostly inducible in most tissues. Expressed in more than 50% of tumors, either by tumoral, stromal, or endothelial cells (expression in tumor is associated with a worse clinical outcome). Not overexpressed in tumor-draining lymph nodes.

Its subcellular location is the cytoplasm. It is found in the cytosol. It carries out the reaction D-tryptophan + O2 = N-formyl-D-kynurenine. The enzyme catalyses L-tryptophan + O2 = N-formyl-L-kynurenine. It participates in amino-acid degradation; L-tryptophan degradation via kynurenine pathway; L-kynurenine from L-tryptophan: step 1/2. With respect to regulation, activity is inhibited by and MTH-trp (methylthiohydantoin-DL-tryptophan), modestly inhibited by L-1MT (1-methyl-L-tryptophan) but not D-1MT (1-methyl-D-tryptophan). In terms of biological role, catalyzes the first and rate limiting step of the catabolism of the essential amino acid tryptophan along the kynurenine pathway. Involved in the peripheral immune tolerance, contributing to maintain homeostasis by preventing autoimmunity or immunopathology that would result from uncontrolled and overreacting immune responses. Tryptophan shortage inhibits T lymphocytes division and accumulation of tryptophan catabolites induces T-cell apoptosis and differentiation of regulatory T-cells. Acts as a suppressor of anti-tumor immunity. Limits the growth of intracellular pathogens by depriving tryptophan. Protects the fetus from maternal immune rejection. This is Indoleamine 2,3-dioxygenase 1 from Homo sapiens (Human).